The sequence spans 216 residues: Flagellin B2 (216 aa).

Positions 1–12 (MKIKEFMSNKKG) are excised as a propeptide. Residues Asn38, Asn72, Asn77, Asn113, Asn172, and Asn208 are each glycosylated (N-linked (GlcNAc...) asparagine).

This sequence belongs to the archaeal flagellin family. In terms of processing, N-linked glycans consist of the 779 Da trisaccharide beta-ManNAc(Thr)-(1-4)-beta-GlcNAc3NAcA-(1-3)-beta-GlcNAc.

It localises to the archaeal flagellum. Flagellin is the subunit protein which polymerizes to form the filaments of archaeal flagella. The polypeptide is Flagellin B2 (flaB2) (Methanococcus voltae).